We begin with the raw amino-acid sequence, 819 residues long: Eukaryotic translation initiation factor 3 subunit C (819 aa).

Residues 1–106 (MSRFFLKTYE…DSSDEEDGKK (106 aa)) are disordered. Acidic residues-rich tracts occupy residues 17 to 41 (GEEE…ELSD) and 47 to 59 (DSDE…EDND). Residues 620 to 795 (FHQHINLDLI…EYIIFERGEE (176 aa)) enclose the PCI domain.

It belongs to the eIF-3 subunit C family. In terms of assembly, component of the eukaryotic translation initiation factor 3 (eIF-3) complex.

The protein localises to the cytoplasm. Functionally, component of the eukaryotic translation initiation factor 3 (eIF-3) complex, which is involved in protein synthesis of a specialized repertoire of mRNAs and, together with other initiation factors, stimulates binding of mRNA and methionyl-tRNAi to the 40S ribosome. The eIF-3 complex specifically targets and initiates translation of a subset of mRNAs involved in cell proliferation. The protein is Eukaryotic translation initiation factor 3 subunit C of Kluyveromyces lactis (strain ATCC 8585 / CBS 2359 / DSM 70799 / NBRC 1267 / NRRL Y-1140 / WM37) (Yeast).